We begin with the raw amino-acid sequence, 2698 residues long: Chromodomain-helicase-DNA-binding protein 6 (2698 aa).

Composition is skewed to basic and acidic residues over residues 1 to 12, 100 to 115, and 122 to 171; these read MKMKIQKKEKQL, EPGE…DREP, and EPKE…KRSC. Residues 1 to 243 are disordered; sequence MKMKIQKKEK…KRRSGRQVKR (243 aa). The tract at residues 1-746 is required for DNA-dependent ATPase activity; it reads MKMKIQKKEK…MMELRKCCNH (746 aa). Positions 213 to 224 are enriched in low complexity; sequence QSLPNPSLQSPE. 2 Chromo domains span residues 291–342 and 374–438; these read NIIE…KDPR and IEID…KPVE. The 175-residue stretch at 472–646 folds into the Helicase ATP-binding domain; that stretch reads LFNWYNRKNC…FSLLNFLEPS (175 aa). ATP is bound at residue 485 to 492; it reads DEMGLGKT. Positions 597–600 match the DEAH box motif; sequence DEAH. The region spanning 786–955 is the Helicase C-terminal domain; that stretch reads LIDKLLPKLI…LSKMEVEDLL (170 aa). The tract at residues 1318–1370 is disordered; that stretch reads SLSAEQGVTDGTSDIPERGNIDKEDSAEDKVDGLQKQTASPSDGSDGIFGEKK. Positions 1320 to 1329 are enriched in polar residues; the sequence is SAEQGVTDGT. The segment covering 1332 to 1350 has biased composition (basic and acidic residues); the sequence is IPERGNIDKEDSAEDKVDG. Residues 1435-1489 form the Myb-like domain; sequence RWTRREQADFYRTVSSFGVVYDQEKEAFDWTQFRAISRLDKKSDENLEHYFHSFV. Polar residues predominate over residues 1707-1730; that stretch reads EPRSFQEAPSTNMQSRKKTVTVSA. The segment at 1707–1731 is disordered; the sequence is EPRSFQEAPSTNMQSRKKTVTVSAS. Position 1852 is a phosphoserine (Ser1852). Disordered stretches follow at residues 1935–2046, 2111–2137, 2308–2337, 2359–2387, 2538–2587, and 2626–2698; these read GLGS…ASGI, LPTP…HSFS, TTLN…QAEK, PGFG…IGSL, ASLA…PTIT, and QGRH…DDTN. Basic and acidic residues-rich tracts occupy residues 1943 to 1955, 1975 to 1991, and 2004 to 2024; these read GEKP…DPYR, FKLK…ESSE, and SEPK…KDGA. Low complexity-rich tracts occupy residues 2117–2127 and 2315–2336; these read SSSAGSRSSLS and PEGP…SQAE. Residues 2538–2550 show a composition bias toward low complexity; the sequence is ASLASTKSGASAT. Positions 2552-2573 are enriched in basic and acidic residues; it reads KTTEDELSGRDVKADSLVEDKP. 2 stretches are compositionally biased toward polar residues: residues 2578–2587 and 2664–2675; these read FSDQSEPTIT and SDQNCTESSVTV. Residues 2677–2698 show a composition bias toward basic and acidic residues; that stretch reads PEREHVAQAREEGLKDSNDDTN.

Belongs to the SNF2/RAD54 helicase family. Interacts with NFE2L2; involved in activation of the transcription. May interact with PPARA. As to expression, widely expressed.

Its subcellular location is the nucleus. It is found in the nucleoplasm. It catalyses the reaction ATP + H2O = ADP + phosphate + H(+). In terms of biological role, ATP-dependent chromatin-remodeling factor. Regulates transcription by disrupting nucleosomes in a largely non-sliding manner which strongly increases the accessibility of chromatin. Activates transcription of specific genes in response to oxidative stress through interaction with NFE2L2. This chain is Chromodomain-helicase-DNA-binding protein 6 (Chd6), found in Rattus norvegicus (Rat).